Reading from the N-terminus, the 793-residue chain is Phenylalanine--tRNA ligase beta subunit (793 aa).

The tRNA-binding domain maps to A39 to R148. The 77-residue stretch at P400 to I476 folds into the B5 domain. Residues D454, D460, E463, and E464 each coordinate Mg(2+). The FDX-ACB domain maps to S698–R791.

The protein belongs to the phenylalanyl-tRNA synthetase beta subunit family. Type 1 subfamily. Tetramer of two alpha and two beta subunits. Mg(2+) serves as cofactor.

The protein resides in the cytoplasm. The enzyme catalyses tRNA(Phe) + L-phenylalanine + ATP = L-phenylalanyl-tRNA(Phe) + AMP + diphosphate + H(+). The polypeptide is Phenylalanine--tRNA ligase beta subunit (Acinetobacter baylyi (strain ATCC 33305 / BD413 / ADP1)).